Here is a 588-residue protein sequence, read N- to C-terminus: Aspartate--tRNA ligase (588 aa).

Residue glutamate 174 participates in L-aspartate binding. The tract at residues 198-201 (QLFK) is aspartate. Position 220 (arginine 220) interacts with L-aspartate. Residues 220-222 (RDE) and glutamine 229 each bind ATP. Histidine 448 lines the L-aspartate pocket. Residue glutamate 482 participates in ATP binding. Arginine 489 is a binding site for L-aspartate. 534–537 (GIDR) serves as a coordination point for ATP.

The protein belongs to the class-II aminoacyl-tRNA synthetase family. Type 1 subfamily. Homodimer.

It localises to the cytoplasm. The catalysed reaction is tRNA(Asp) + L-aspartate + ATP = L-aspartyl-tRNA(Asp) + AMP + diphosphate. Catalyzes the attachment of L-aspartate to tRNA(Asp) in a two-step reaction: L-aspartate is first activated by ATP to form Asp-AMP and then transferred to the acceptor end of tRNA(Asp). In Xanthomonas campestris pv. campestris (strain B100), this protein is Aspartate--tRNA ligase.